The chain runs to 690 residues: Elongation factor G (690 aa).

The 276-residue stretch at 8-283 (EDYRNFGIMA…AVVDYLPSPV (276 aa)) folds into the tr-type G domain. Residues 17 to 24 (AHIDAGKT), 81 to 85 (DTPGH), and 135 to 138 (NKMD) each bind GTP.

It belongs to the TRAFAC class translation factor GTPase superfamily. Classic translation factor GTPase family. EF-G/EF-2 subfamily.

It is found in the cytoplasm. In terms of biological role, catalyzes the GTP-dependent ribosomal translocation step during translation elongation. During this step, the ribosome changes from the pre-translocational (PRE) to the post-translocational (POST) state as the newly formed A-site-bound peptidyl-tRNA and P-site-bound deacylated tRNA move to the P and E sites, respectively. Catalyzes the coordinated movement of the two tRNA molecules, the mRNA and conformational changes in the ribosome. The protein is Elongation factor G of Rhodopseudomonas palustris (strain BisB18).